Here is a 155-residue protein sequence, read N- to C-terminus: Xanthine-guanine phosphoribosyltransferase (155 aa).

Residues Arg-37–Gly-38, Arg-69, and Asp-90–Thr-98 contribute to the 5-phospho-alpha-D-ribose 1-diphosphate site. Arg-69 contributes to the GMP binding site. Residue Asp-91 participates in Mg(2+) binding. 2 residues coordinate guanine: Asp-94 and Ile-137. The xanthine site is built by Asp-94 and Ile-137. GMP-binding positions include Asp-94 to Thr-98 and Trp-136 to Ile-137.

The protein belongs to the purine/pyrimidine phosphoribosyltransferase family. XGPT subfamily. Homotetramer. It depends on Mg(2+) as a cofactor.

The protein resides in the cell inner membrane. It carries out the reaction GMP + diphosphate = guanine + 5-phospho-alpha-D-ribose 1-diphosphate. The enzyme catalyses XMP + diphosphate = xanthine + 5-phospho-alpha-D-ribose 1-diphosphate. The catalysed reaction is IMP + diphosphate = hypoxanthine + 5-phospho-alpha-D-ribose 1-diphosphate. It participates in purine metabolism; GMP biosynthesis via salvage pathway; GMP from guanine: step 1/1. The protein operates within purine metabolism; XMP biosynthesis via salvage pathway; XMP from xanthine: step 1/1. Its function is as follows. Purine salvage pathway enzyme that catalyzes the transfer of the ribosyl-5-phosphate group from 5-phospho-alpha-D-ribose 1-diphosphate (PRPP) to the N9 position of the 6-oxopurines guanine and xanthine to form the corresponding ribonucleotides GMP (guanosine 5'-monophosphate) and XMP (xanthosine 5'-monophosphate), with the release of PPi. To a lesser extent, also acts on hypoxanthine. This Aeromonas salmonicida (strain A449) protein is Xanthine-guanine phosphoribosyltransferase.